A 288-amino-acid polypeptide reads, in one-letter code: Pyridoxal kinase PdxY (288 aa).

Substrate is bound by residues Ser-9 and 44–45; that span reads TQ. Residues Asp-111, Glu-148, and Lys-181 each coordinate ATP. Substrate is bound at residue Asp-224.

Belongs to the pyridoxine kinase family. PdxY subfamily. Homodimer. The cofactor is Mg(2+).

The enzyme catalyses pyridoxal + ATP = pyridoxal 5'-phosphate + ADP + H(+). It functions in the pathway cofactor metabolism; pyridoxal 5'-phosphate salvage; pyridoxal 5'-phosphate from pyridoxal: step 1/1. Functionally, pyridoxal kinase involved in the salvage pathway of pyridoxal 5'-phosphate (PLP). Catalyzes the phosphorylation of pyridoxal to PLP. The sequence is that of Pyridoxal kinase PdxY from Haemophilus influenzae (strain ATCC 51907 / DSM 11121 / KW20 / Rd).